We begin with the raw amino-acid sequence, 974 residues long: Toxin subunit YenC1 (974 aa).

RHS repeat units lie at residues 165-179, 290-304, 322-336, 354-368, 398-412, 490-504, 570-584, 596-610, and 630-644; these read AGQCLRHYNSAGLNQ, GVLTTYSYEAETQRL, FQDLRYTYDPVGNVL, VPENTYIYDTLYQLV, NYIRNYHYDSAGNLM, SDSETYRYDANSQRV, NDELRYSYDNLIGSS, SQEEYYPYGGTAVWM, and DATGLYYYGFRYYQP. The RHS-repeat associated core domain stretch occupies residues 600 to 680; it reads YYPYGGTAVW…PIVLHDPDGL (81 aa). Residues 699–940 are cytotoxic necrotising factor domain; the sequence is ISSLKGTGPF…GEVSASTLLE (242 aa).

The protein belongs to the RHS family. In terms of assembly, semipurified toxin complex consists of at least YenA1-YenA2-YenB-YenC1-YenC2-Chi1-Chi2. The Yen-TC:K9 subcomplex is about 26 nm tall and 22 nm in diameter with 5-fold symmetry and 5 copies of YenA1, YenA2, Chi1 and Chi2; the chitinase subunits may be solvent accessible on the exterior the complex. The Yen-TC:K9 subcomplex has no insecticidal activity. The native complex with additional YenB, YenC1 and YenC2 subunits is 16 nm taller and is insecticidal; the toxicity-conferring subunits are present at about 1 copy each.

Its subcellular location is the secreted. Its activity is regulated as follows. Toxin complex is secreted when grown at 25 degrees Celsius or less; at higher temperatures the proteins are present intracellularly but not secreted. In terms of biological role, part of an orally active toxin complex (TC) with strong insecticidal effects on larvae of the Coleoptera Costelytra zealandica, Acrossidius tasmania and Adoryphorus couloni and some Lepidoptera larvae. The TC has an endochitinase activity. In Yersinia entomophaga, this protein is Toxin subunit YenC1.